The primary structure comprises 279 residues: Alcohol dehydrogenase-related 31 kDa protein (279 aa).

11–34 (YVADCGGIALETSKVLMTKNIAKL) serves as a coordination point for NAD(+). Position 139 (S139) interacts with substrate. The active-site Proton acceptor is the Y152.

The protein belongs to the short-chain dehydrogenases/reductases (SDR) family.

The polypeptide is Alcohol dehydrogenase-related 31 kDa protein (Adhr) (Drosophila subobscura (Fruit fly)).